The following is a 496-amino-acid chain: Probable diguanylate cyclase DgcJ (496 aa).

2 helical membrane-spanning segments follow: residues 11–31 and 305–325; these read FIAASVIVLTSSFLIFELVAS and ILYFITSSWKSVLFWILTALI. Residues 374-496 enclose the GGDEF domain; that stretch reads SSVMFIAIDM…VNKQNKNSRS (123 aa). A Mg(2+)-binding site is contributed by D382. Positions 390, 395, and 399 each coordinate substrate. D425 lines the Mg(2+) pocket. The Proton acceptor role is filled by D425.

As to quaternary structure, homodimer. The cofactor is Mg(2+).

The protein localises to the cell inner membrane. The catalysed reaction is 2 GTP = 3',3'-c-di-GMP + 2 diphosphate. Its pathway is purine metabolism; 3',5'-cyclic di-GMP biosynthesis. Functionally, catalyzes the synthesis of cyclic-di-GMP (c-di-GMP) via the condensation of 2 GTP molecules. The protein is Probable diguanylate cyclase DgcJ of Escherichia coli (strain K12).